A 327-amino-acid chain; its full sequence is GTPase Obg (327 aa).

Residues 2 to 160 enclose the Obg domain; it reads HLFKDSLNLI…LNLRLELSLI (159 aa). The OBG-type G domain occupies 161–326; it reads ADVGLVGLPN…LVSEFFSLAK (166 aa). Residues 167-174, 192-196, 213-216, 280-283, and 307-309 each bind GTP; these read GLPNAGKS, FTTKI, DLPG, SKLD, and SIY. Positions 174 and 194 each coordinate Mg(2+).

This sequence belongs to the TRAFAC class OBG-HflX-like GTPase superfamily. OBG GTPase family. In terms of assembly, monomer. Mg(2+) is required as a cofactor.

It localises to the cytoplasm. In terms of biological role, an essential GTPase which binds GTP, GDP and possibly (p)ppGpp with moderate affinity, with high nucleotide exchange rates and a fairly low GTP hydrolysis rate. Plays a role in control of the cell cycle, stress response, ribosome biogenesis and in those bacteria that undergo differentiation, in morphogenesis control. The protein is GTPase Obg of Borrelia recurrentis (strain A1).